Consider the following 339-residue polypeptide: Glycerol-3-phosphate dehydrogenase [NAD(P)+] (339 aa).

Residues Ser13, Trp14, and Lys108 each contribute to the NADPH site. Sn-glycerol 3-phosphate-binding residues include Lys108, Gly139, and Ser141. Ala143 lines the NADPH pocket. Lys194, Asp247, Ser257, Arg258, and Asn259 together coordinate sn-glycerol 3-phosphate. Catalysis depends on Lys194, which acts as the Proton acceptor. Arg258 lines the NADPH pocket. The NADPH site is built by Val282 and Glu284.

The protein belongs to the NAD-dependent glycerol-3-phosphate dehydrogenase family.

The protein localises to the cytoplasm. It catalyses the reaction sn-glycerol 3-phosphate + NAD(+) = dihydroxyacetone phosphate + NADH + H(+). It carries out the reaction sn-glycerol 3-phosphate + NADP(+) = dihydroxyacetone phosphate + NADPH + H(+). Its pathway is membrane lipid metabolism; glycerophospholipid metabolism. Catalyzes the reduction of the glycolytic intermediate dihydroxyacetone phosphate (DHAP) to sn-glycerol 3-phosphate (G3P), the key precursor for phospholipid synthesis. This is Glycerol-3-phosphate dehydrogenase [NAD(P)+] from Streptococcus equi subsp. zooepidemicus (strain H70).